The following is an 811-amino-acid chain: DNA mismatch repair protein MutS (811 aa).

Glycine 595 to serine 602 contributes to the ATP binding site.

It belongs to the DNA mismatch repair MutS family.

This protein is involved in the repair of mismatches in DNA. It is possible that it carries out the mismatch recognition step. This protein has a weak ATPase activity. In Pseudothermotoga lettingae (strain ATCC BAA-301 / DSM 14385 / NBRC 107922 / TMO) (Thermotoga lettingae), this protein is DNA mismatch repair protein MutS.